The primary structure comprises 274 residues: Acetyl-coenzyme A carboxylase carboxyl transferase subunit alpha (274 aa).

The region spanning 1 to 245 (MENSQELTPW…RENLKKAIEG (245 aa)) is the CoA carboxyltransferase C-terminal domain.

It belongs to the AccA family. In terms of assembly, acetyl-CoA carboxylase is a heterohexamer composed of biotin carboxyl carrier protein (AccB), biotin carboxylase (AccC) and two subunits each of ACCase subunit alpha (AccA) and ACCase subunit beta (AccD).

It localises to the cytoplasm. The enzyme catalyses N(6)-carboxybiotinyl-L-lysyl-[protein] + acetyl-CoA = N(6)-biotinyl-L-lysyl-[protein] + malonyl-CoA. The protein operates within lipid metabolism; malonyl-CoA biosynthesis; malonyl-CoA from acetyl-CoA: step 1/1. Functionally, component of the acetyl coenzyme A carboxylase (ACC) complex. First, biotin carboxylase catalyzes the carboxylation of biotin on its carrier protein (BCCP) and then the CO(2) group is transferred by the carboxyltransferase to acetyl-CoA to form malonyl-CoA. This is Acetyl-coenzyme A carboxylase carboxyl transferase subunit alpha from Clostridium acetobutylicum (strain ATCC 824 / DSM 792 / JCM 1419 / IAM 19013 / LMG 5710 / NBRC 13948 / NRRL B-527 / VKM B-1787 / 2291 / W).